Consider the following 803-residue polypeptide: MASTIMSQEVSWTDILEKHPALRWIKPIPEDWEIFPKHLCAFESFLYVAVGQEVRSLDCRLLKHKNEASHKNFYKKLFNPELDFMIEQICLSKNGRFLAVVGKSKIVILGLRSKLSEQNPLAESVSNFGESVNNFSNSEHQENGTNSLKLSEVTICSVAVINPSSQIVSVRFHPLGKSGRSLVVLTETSLLLYEAGNGVLMPDYEIPLKLTHQASNSFDADVDLHIPTAFCFSNVSQGWGVFTIYILTRGGDVFSVCPVMPANAMIPQDVLKQIRLILTKKEDDADAENHRRNVHWITKLLGEAALANDLSTSFVISEGSSELFDSSDYVSVRRPDDFSFIPSMQGPFLLQPAVADDELIEDYCDIYSFGMNPIDVLAIGGSEGRLDLLLLVSEVSGRWSKLNDHGLASMKLIVSQVHSLYLSNNNPYMVLQPDIQSPYSLIAYHANGLHVVDIESWARDLNLNFENSEFLNNEEENDEDELSNVLVSIPSRTSVLERLDTNPLNESTDAVVGCAQLYYPSLGKILISLTRNWQTTVFDDSDLATMGVNKESLSNEMDYSKSLGTSSLEQVDDLDEKLTYTPLYVSLLEKTPFTDPSIPSLVERTIVPAELQNEITVSSASLRFLGKVVARYRETLNLLDHGCSELHHRLKLQREEYERQQNHIYKLSDRISNFREKAWSTEHLEHLTSDMSMCEKRIDQVLQRVMDLRVPDLSDKEKQFIKEIGNYKEKVTGERGIEKRVETLKTLLQRTKPRDAQTTLVASSSDMRLAAIEQLQKLLAQQSLSIKELKTKTVSFQRLLQTS.

In terms of assembly, component of the nuclear pore complex (NPC). NPC constitutes the exclusive means of nucleocytoplasmic transport. NPCs allow the passive diffusion of ions and small molecules and the active, nuclear transport receptor-mediated bidirectional transport of macromolecules such as proteins, RNAs, ribonucleoparticles (RNPs), and ribosomal subunits across the nuclear envelope.

Its subcellular location is the nucleus. The protein resides in the nuclear pore complex. It is found in the nucleus membrane. In terms of biological role, functions as a component of the nuclear pore complex (NPC). NPC components, collectively referred to as nucleoporins (NUPs), can play the role of both NPC structural components and of docking or interaction partners for transiently associated nuclear transport factors. The sequence is that of Nucleoporin nup82 from Schizosaccharomyces pombe (strain 972 / ATCC 24843) (Fission yeast).